Consider the following 329-residue polypeptide: AUGMIN subunit 7 (329 aa).

The stretch at 169-197 (DVSELETKLSEQAKILSNLQQKVDDLAAK) forms a coiled coil.

In terms of assembly, part of the augmin complex composed of 8 subunits. The complex acts on microtubules and interacts with gamma-tubulin in spindles and the phragmoplast.

It is found in the cytoplasm. The protein resides in the cytoskeleton. It localises to the spindle. Its subcellular location is the phragmoplast. In terms of biological role, contributes to the assembly of the acentrosomal spindle and phragmoplast microtubule arrays as part of the augmin complex. Regulates the association of gamma-tubulin with the spindle and phragmoplast microtubules. This is AUGMIN subunit 7 from Arabidopsis thaliana (Mouse-ear cress).